Reading from the N-terminus, the 278-residue chain is HTH-type transcriptional regulator HdfR (278 aa).

In terms of domain architecture, HTH lysR-type spans 1 to 58 (MDTELLKTFLEVSRTRHFGRAAEALYLTQSAVSFRIRQLENQLGVNLFTRHRNNIRLT). Positions 18-37 (FGRAAEALYLTQSAVSFRIR) form a DNA-binding region, H-T-H motif.

It belongs to the LysR transcriptional regulatory family.

Functionally, negatively regulates the transcription of the flagellar master operon flhDC by binding to the upstream region of the operon. The protein is HTH-type transcriptional regulator HdfR of Salmonella dublin (strain CT_02021853).